The primary structure comprises 279 residues: Diaminopimelate epimerase (279 aa).

Substrate is bound by residues asparagine 11 and asparagine 63. The Proton donor role is filled by cysteine 72. Substrate contacts are provided by residues 73–74 (GN), asparagine 161, asparagine 194, and 212–213 (ER). The active-site Proton acceptor is the cysteine 221. 222-223 (GT) contributes to the substrate binding site.

It belongs to the diaminopimelate epimerase family. In terms of assembly, homodimer.

It is found in the cytoplasm. It carries out the reaction (2S,6S)-2,6-diaminopimelate = meso-2,6-diaminopimelate. It functions in the pathway amino-acid biosynthesis; L-lysine biosynthesis via DAP pathway; DL-2,6-diaminopimelate from LL-2,6-diaminopimelate: step 1/1. Its function is as follows. Catalyzes the stereoinversion of LL-2,6-diaminopimelate (L,L-DAP) to meso-diaminopimelate (meso-DAP), a precursor of L-lysine and an essential component of the bacterial peptidoglycan. The chain is Diaminopimelate epimerase from Moorella thermoacetica (strain ATCC 39073 / JCM 9320).